The sequence spans 146 residues: Hemoglobin subunit beta (146 aa).

Residues 2-146 (HWTAEEKQLI…VAHALARKYH (145 aa)) form the Globin domain. Histidine 63 and histidine 92 together coordinate heme b.

Belongs to the globin family. In terms of assembly, heterotetramer of two alpha chains and two beta chains. As to expression, red blood cells.

Functionally, involved in oxygen transport from the lung to the various peripheral tissues. The chain is Hemoglobin subunit beta (HBB) from Ara ararauna (Blue-and-yellow macaw).